Consider the following 193-residue polypeptide: Putative manganese efflux pump MntP (193 aa).

The next 6 membrane-spanning stretches (helical) occupy residues 3–23 (IFAV…VAVV), 41–61 (AAFG…GVSV), 69–89 (DHWI…LSGL), 107–127 (AGRN…AVGL), 130–150 (AILG…CAVI), and 164–184 (LCAL…AIAC).

Belongs to the MntP (TC 9.B.29) family.

It is found in the cell inner membrane. In terms of biological role, probably functions as a manganese efflux pump. The sequence is that of Putative manganese efflux pump MntP from Desulfovibrio desulfuricans (strain ATCC 27774 / DSM 6949 / MB).